Here is a 167-residue protein sequence, read N- to C-terminus: Leptin (167 aa).

Positions 1-21 are cleaved as a signal peptide; sequence MRCGSLCRFLWLWSCLPYIEA. A disulfide bridge connects residues Cys-117 and Cys-167.

This sequence belongs to the leptin family.

The protein resides in the secreted. Functionally, key player in the regulation of energy balance and body weight control. Once released into the circulation, has central and peripheral effects by binding LEPR, found in many tissues, which results in the activation of several major signaling pathways. In the hypothalamus, acts as an appetite-regulating factor that induces a decrease in food intake and an increase in energy consumption by inducing anorexinogenic factors and suppressing orexigenic neuropeptides, also regulates bone mass and secretion of hypothalamo-pituitary-adrenal hormones. In the periphery, increases basal metabolism, influences reproductive function, regulates pancreatic beta-cell function and insulin secretion, is pro-angiogenic for endothelial cell and affects innate and adaptive immunity. In the arcuate nucleus of the hypothalamus, activates by depolarization POMC neurons inducing FOS and SOCS3 expression to release anorexigenic peptides and inhibits by hyperpolarization NPY neurons inducing SOCS3 with a consequent reduction on release of orexigenic peptides. In addition to its known satiety inducing effect, has a modulatory role in nutrient absorption. In the intestine, reduces glucose absorption by enterocytes by activating PKC and leading to a sequential activation of p38, PI3K and ERK signaling pathways which exerts an inhibitory effect on glucose absorption. Acts as a growth factor on certain tissues, through the activation of different signaling pathways increases expression of genes involved in cell cycle regulation such as CCND1, via JAK2-STAT3 pathway, or VEGFA, via MAPK1/3 and PI3K-AKT1 pathways. May also play an apoptotic role via JAK2-STAT3 pathway and up-regulation of BIRC5 expression. Pro-angiogenic, has mitogenic activity on vascular endothelial cells and plays a role in matrix remodeling by regulating the expression of matrix metalloproteinases (MMPs) and tissue inhibitors of metalloproteinases (TIMPs). In innate immunity, modulates the activity and function of neutrophils by increasing chemotaxis and the secretion of oxygen radicals. Increases phagocytosis by macrophages and enhances secretion of pro-inflammatory mediators. Increases cytotoxic ability of NK cells. Plays a pro-inflammatory role, in synergy with IL1B, by inducing NOS2 which promotes the production of IL6, IL8 and Prostaglandin E2, through a signaling pathway that involves JAK2, PI3K, MAP2K1/MEK1 and MAPK14/p38. In adaptive immunity, promotes the switch of memory T-cells towards T helper-1 cell immune responses. Increases CD4(+)CD25(-) T-cell proliferation and reduces autophagy during TCR (T-cell receptor) stimulation, through MTOR signaling pathway activation and BCL2 up-regulation. This chain is Leptin (LEP), found in Halichoerus grypus (Gray seal).